The following is a 300-amino-acid chain: tRNA pseudouridine synthase B (300 aa).

D38 functions as the Nucleophile in the catalytic mechanism.

It belongs to the pseudouridine synthase TruB family. Type 1 subfamily.

It catalyses the reaction uridine(55) in tRNA = pseudouridine(55) in tRNA. Responsible for synthesis of pseudouridine from uracil-55 in the psi GC loop of transfer RNAs. This chain is tRNA pseudouridine synthase B, found in Anaplasma phagocytophilum (strain HZ).